We begin with the raw amino-acid sequence, 452 residues long: Neuronal acetylcholine receptor subunit alpha-5 (452 aa).

The first 27 residues, 1–27 (MVQLLAGRWRPTGARRGTRGGLPELSS), serve as a signal peptide directing secretion. The Extracellular portion of the chain corresponds to 28–239 (AAKHEDSLFR…VIKRLPLFYT (212 aa)). N-linked (GlcNAc...) asparagine glycans are attached at residues N140, N168, and N214. An intrachain disulfide couples C155 to C169. A disulfide bond links C219 and C220. A run of 3 helical transmembrane segments spans residues 240-260 (LFLI…FYLP), 269-289 (LCTS…EIIP), and 302-322 (LVFT…AINI). Residues 323 to 414 (HHRSSSTHNA…KFIAQVLDRM (92 aa)) lie on the Cytoplasmic side of the membrane. Residues 415-435 (FLWTFLLVSIIGTLGLFVPVI) traverse the membrane as a helical segment. Over 436–452 (YKWANIIVPVHIGNTIK) the chain is Extracellular.

It belongs to the ligand-gated ion channel (TC 1.A.9) family. Acetylcholine receptor (TC 1.A.9.1) subfamily. Alpha-5/CHRNA5 sub-subfamily. Neuronal AChR that forms heteropentamers composed of two different type of subunits: alpha and non-alpha (beta). CHRNA5/alpha-5 subunit is only able to form functional nAChRs when co-assembled with another alpha subunit, can be combined to CHRNA4/alpha-4 or CHRNA3/alpha-3 and CHRNB4/beta-4 or CHRNB2/beta-2 to give rise to functional receptors. Interacts with LYPD6.

The protein resides in the synaptic cell membrane. It localises to the cell membrane. It carries out the reaction Ca(2+)(in) = Ca(2+)(out). The catalysed reaction is K(+)(in) = K(+)(out). The enzyme catalyses Na(+)(in) = Na(+)(out). Its activity is regulated as follows. Activated by a myriad of ligands such as acetylcholine, cytisine, nicotine, choline and epibatidine. In terms of biological role, component of neuronal acetylcholine receptors (nAChRs) that function as pentameric, ligand-gated cation channels with high calcium permeability among other activities. nAChRs are excitatory neurotrasnmitter receptors formed by a collection of nAChR subunits known to mediate synaptic transmission in the nervous system and the neuromuscular junction. Each nAchR subunit confers differential attributes to channel properties, including activation, deactivation and desensitization kinetics, pH sensitivity, cation permeability, and binding to allosteric modulators. Has an accessory rather than functional role and is only able to form functional nAChRs when co-assembled with another beta subunit. Participates in pentameric assemblies along with CHRNA3, CHRNA4, CHRNB2 and CHRNB4. Increases receptor sensitivity to acetylcholine and nicotine when associated with CHRNA4 and CHRNB2. Plays a role in nicotine addiction. The chain is Neuronal acetylcholine receptor subunit alpha-5 (Chrna5) from Rattus norvegicus (Rat).